Here is a 478-residue protein sequence, read N- to C-terminus: Aspartyl/glutamyl-tRNA(Asn/Gln) amidotransferase subunit B (478 aa).

The protein belongs to the GatB/GatE family. GatB subfamily. In terms of assembly, heterotrimer of A, B and C subunits.

The catalysed reaction is L-glutamyl-tRNA(Gln) + L-glutamine + ATP + H2O = L-glutaminyl-tRNA(Gln) + L-glutamate + ADP + phosphate + H(+). It carries out the reaction L-aspartyl-tRNA(Asn) + L-glutamine + ATP + H2O = L-asparaginyl-tRNA(Asn) + L-glutamate + ADP + phosphate + 2 H(+). In terms of biological role, allows the formation of correctly charged Asn-tRNA(Asn) or Gln-tRNA(Gln) through the transamidation of misacylated Asp-tRNA(Asn) or Glu-tRNA(Gln) in organisms which lack either or both of asparaginyl-tRNA or glutaminyl-tRNA synthetases. The reaction takes place in the presence of glutamine and ATP through an activated phospho-Asp-tRNA(Asn) or phospho-Glu-tRNA(Gln). In Alkalilimnicola ehrlichii (strain ATCC BAA-1101 / DSM 17681 / MLHE-1), this protein is Aspartyl/glutamyl-tRNA(Asn/Gln) amidotransferase subunit B.